The primary structure comprises 157 residues: Deoxyuridine 5'-triphosphate nucleotidohydrolase (157 aa).

Residues 73 to 75, Asn-86, and 90 to 92 each bind substrate; these read RSG and TID.

Belongs to the dUTPase family. It depends on Mg(2+) as a cofactor.

It catalyses the reaction dUTP + H2O = dUMP + diphosphate + H(+). It functions in the pathway pyrimidine metabolism; dUMP biosynthesis; dUMP from dCTP (dUTP route): step 2/2. Functionally, this enzyme is involved in nucleotide metabolism: it produces dUMP, the immediate precursor of thymidine nucleotides and it decreases the intracellular concentration of dUTP so that uracil cannot be incorporated into DNA. This chain is Deoxyuridine 5'-triphosphate nucleotidohydrolase, found in Azorhizobium caulinodans (strain ATCC 43989 / DSM 5975 / JCM 20966 / LMG 6465 / NBRC 14845 / NCIMB 13405 / ORS 571).